The chain runs to 440 residues: N-succinylarginine dihydrolase (440 aa).

Substrate-binding positions include 17-26 (GGLSPGNLAS), N108, and 135-136 (HR). Residues 17-37 (GGLSPGNLASQSHVGEPSHPR) form a disordered region. E172 is an active-site residue. A substrate-binding site is contributed by R210. The active site involves H246. D248 and N358 together coordinate substrate. Residue C364 is the Nucleophile of the active site.

The protein belongs to the succinylarginine dihydrolase family. Homodimer.

It carries out the reaction N(2)-succinyl-L-arginine + 2 H2O + 2 H(+) = N(2)-succinyl-L-ornithine + 2 NH4(+) + CO2. It participates in amino-acid degradation; L-arginine degradation via AST pathway; L-glutamate and succinate from L-arginine: step 2/5. In terms of biological role, catalyzes the hydrolysis of N(2)-succinylarginine into N(2)-succinylornithine, ammonia and CO(2). The polypeptide is N-succinylarginine dihydrolase (Myxococcus xanthus (strain DK1622)).